A 147-amino-acid polypeptide reads, in one-letter code: MKVIAINKKARFDYSLIDEFEAGIVLLGTEVKALKYHSASLNEAFVAFRRFELWLNNMHVPPYKPASRFNHVPTRSRKLLVHKRQLNKISGAVRTKGLTLVPLSIYVNENGLIKVKFALAKGKKKHDKRQDIKDRDWARKQARQDFS.

The tract at residues 124 to 147 (KKHDKRQDIKDRDWARKQARQDFS) is disordered. Over residues 128–147 (KRQDIKDRDWARKQARQDFS) the composition is skewed to basic and acidic residues.

The protein belongs to the SmpB family.

The protein resides in the cytoplasm. Its function is as follows. Required for rescue of stalled ribosomes mediated by trans-translation. Binds to transfer-messenger RNA (tmRNA), required for stable association of tmRNA with ribosomes. tmRNA and SmpB together mimic tRNA shape, replacing the anticodon stem-loop with SmpB. tmRNA is encoded by the ssrA gene; the 2 termini fold to resemble tRNA(Ala) and it encodes a 'tag peptide', a short internal open reading frame. During trans-translation Ala-aminoacylated tmRNA acts like a tRNA, entering the A-site of stalled ribosomes, displacing the stalled mRNA. The ribosome then switches to translate the ORF on the tmRNA; the nascent peptide is terminated with the 'tag peptide' encoded by the tmRNA and targeted for degradation. The ribosome is freed to recommence translation, which seems to be the essential function of trans-translation. The chain is SsrA-binding protein from Neorickettsia sennetsu (strain ATCC VR-367 / Miyayama) (Ehrlichia sennetsu).